Reading from the N-terminus, the 387-residue chain is uncharacterized protein (387 aa).

This is an uncharacterized protein from Escherichia coli (strain K12).